We begin with the raw amino-acid sequence, 1381 residues long: DNA-directed RNA polymerase subunit beta' (1381 aa).

4 residues coordinate Zn(2+): Cys70, Cys72, Cys85, and Cys88. Residues Asp461, Asp463, and Asp465 each contribute to the Mg(2+) site. The Zn(2+) site is built by Cys801, Cys875, Cys882, and Cys885. The tract at residues 1362 to 1381 is disordered; the sequence is VEIEGDENSNKKSLDMHAAN. Basic and acidic residues predominate over residues 1369-1381; it reads NSNKKSLDMHAAN.

It belongs to the RNA polymerase beta' chain family. The RNAP catalytic core consists of 2 alpha, 1 beta, 1 beta' and 1 omega subunit. When a sigma factor is associated with the core the holoenzyme is formed, which can initiate transcription. The cofactor is Mg(2+). Requires Zn(2+) as cofactor.

It carries out the reaction RNA(n) + a ribonucleoside 5'-triphosphate = RNA(n+1) + diphosphate. Its function is as follows. DNA-dependent RNA polymerase catalyzes the transcription of DNA into RNA using the four ribonucleoside triphosphates as substrates. This chain is DNA-directed RNA polymerase subunit beta', found in Syntrophus aciditrophicus (strain SB).